The chain runs to 369 residues: S-(hydroxymethyl)glutathione dehydrogenase (369 aa).

Positions 40, 62, 92, 95, 98, 106, and 169 each coordinate Zn(2+).

Belongs to the zinc-containing alcohol dehydrogenase family. Class-III subfamily. As to quaternary structure, homodimer. Zn(2+) serves as cofactor.

It localises to the cytoplasm. The catalysed reaction is S-(hydroxymethyl)glutathione + NADP(+) = S-formylglutathione + NADPH + H(+). It catalyses the reaction S-(hydroxymethyl)glutathione + NAD(+) = S-formylglutathione + NADH + H(+). The enzyme catalyses a primary alcohol + NAD(+) = an aldehyde + NADH + H(+). It carries out the reaction a secondary alcohol + NAD(+) = a ketone + NADH + H(+). The catalysed reaction is S-nitrosoglutathione + NADH + H(+) = S-(hydroxysulfenamide)glutathione + NAD(+). Functionally, has high formaldehyde dehydrogenase activity in the presence of glutathione and catalyzes the oxidation of normal alcohols in a reaction that is not GSH-dependent. In addition, hemithiolacetals other than those formed from GSH, including omega-thiol fatty acids, also are substrates. Also acts as a S-nitroso-glutathione reductase by catalyzing the NADH-dependent reduction of S-nitrosoglutathione. The protein is S-(hydroxymethyl)glutathione dehydrogenase (frmA) of Escherichia coli (strain SMS-3-5 / SECEC).